The following is a 115-amino-acid chain: NADH-ubiquinone oxidoreductase chain 3 (115 aa).

The next 3 helical transmembrane spans lie at 4–24, 55–75, and 87–107; these read LITM…AFWL, FFLV…LLPL, and TMMV…YEWL.

This sequence belongs to the complex I subunit 3 family. As to quaternary structure, core subunit of respiratory chain NADH dehydrogenase (Complex I) which is composed of 45 different subunits. Interacts with TMEM186. Interacts with TMEM242.

The protein localises to the mitochondrion inner membrane. The catalysed reaction is a ubiquinone + NADH + 5 H(+)(in) = a ubiquinol + NAD(+) + 4 H(+)(out). Functionally, core subunit of the mitochondrial membrane respiratory chain NADH dehydrogenase (Complex I) which catalyzes electron transfer from NADH through the respiratory chain, using ubiquinone as an electron acceptor. Essential for the catalytic activity of complex I. The protein is NADH-ubiquinone oxidoreductase chain 3 of Notiomys edwardsii (Edwards's long-clawed mouse).